Reading from the N-terminus, the 174-residue chain is UPF0113 protein AF_0058 (174 aa).

A PUA domain is found at Arg87–Arg161.

The protein belongs to the UPF0113 family.

The polypeptide is UPF0113 protein AF_0058 (Archaeoglobus fulgidus (strain ATCC 49558 / DSM 4304 / JCM 9628 / NBRC 100126 / VC-16)).